The primary structure comprises 203 residues: MSRYRGPRFKKIRRLGALPGLTSKRPRAGSDPRNQELSGNKSQYRIRLEEKQKLRFHYGLTERQLLKYVRIAGKAKGPTGQVLLQLLEMRLDNILFRLGMASTIPQARQLVNHRHILVNGRIVDIPSYRCKPRDIITAKDDQKSKAMIQNSLESPPHEEVPKHLTFHPFQYKGLVNQIIDSEWVGLKINELLVVEYYSRQTKT.

Positions 15 to 42 are disordered; it reads LGALPGLTSKRPRAGSDPRNQELSGNKS. The region spanning 89–150 is the S4 RNA-binding domain; it reads MRLDNILFRL…DQKSKAMIQN (62 aa).

It belongs to the universal ribosomal protein uS4 family. As to quaternary structure, part of the 30S ribosomal subunit. Contacts protein S5. The interaction surface between S4 and S5 is involved in control of translational fidelity.

The protein resides in the plastid. The protein localises to the chloroplast. One of the primary rRNA binding proteins, it binds directly to 16S rRNA where it nucleates assembly of the body of the 30S subunit. Its function is as follows. With S5 and S12 plays an important role in translational accuracy. This is Small ribosomal subunit protein uS4c (rps4) from Oenothera elata subsp. hookeri (Hooker's evening primrose).